We begin with the raw amino-acid sequence, 202 residues long: Imidazoleglycerol-phosphate dehydratase (202 aa).

It belongs to the imidazoleglycerol-phosphate dehydratase family.

The protein localises to the cytoplasm. The enzyme catalyses D-erythro-1-(imidazol-4-yl)glycerol 3-phosphate = 3-(imidazol-4-yl)-2-oxopropyl phosphate + H2O. Its pathway is amino-acid biosynthesis; L-histidine biosynthesis; L-histidine from 5-phospho-alpha-D-ribose 1-diphosphate: step 6/9. In Corynebacterium efficiens (strain DSM 44549 / YS-314 / AJ 12310 / JCM 11189 / NBRC 100395), this protein is Imidazoleglycerol-phosphate dehydratase.